The following is a 517-amino-acid chain: Probable anion transporter 6, chloroplastic (517 aa).

Residues 51 to 73 (TERVRESKKLPPKDPIEDPKPQL) form a disordered region. Residues 52-70 (ERVRESKKLPPKDPIEDPK) show a composition bias toward basic and acidic residues. A run of 10 helical transmembrane segments spans residues 130–150 (FGWS…GYAL), 170–190 (IGVF…GFMP), 229–249 (FVFG…PPII), 255–275 (ESVF…FQFL), 312–332 (SFFQ…GSWG), 352–372 (LTEA…VTSL), 397–417 (IAFV…GLPP), 420–440 (IVGI…GLYC), 452–472 (ILLG…VALT), and 484–504 (MSLF…WLAF).

This sequence belongs to the major facilitator superfamily. Sodium/anion cotransporter (TC 2.A.1.14) family. As to expression, expressed in leaf veins and sepals.

The protein resides in the plastid. The protein localises to the chloroplast membrane. Functionally, inorganic phosphate and probable anion transporter. The protein is Probable anion transporter 6, chloroplastic (ANTR6) of Arabidopsis thaliana (Mouse-ear cress).